The primary structure comprises 68 residues: Conotoxin Cal14.13b (68 aa).

A signal peptide spans 1–20 (MKLCVVIVLLMLAMPFNGGE). A propeptide spanning residues 21 to 68 (ASRFFNQHARSQRSGMKTRGIWCDPPCPEGETCRGGECSDEFNGDMGR) is cleaved from the precursor. Methionine 66 is modified (methionine amide).

In terms of processing, contains 2 disulfide bonds. In terms of tissue distribution, expressed by the venom duct.

The protein resides in the secreted. Functionally, probable neurotoxin with unknown target. Possibly targets ion channels. In Californiconus californicus (California cone), this protein is Conotoxin Cal14.13b.